The chain runs to 343 residues: HTH-type transcriptional regulator GntR (343 aa).

In terms of domain architecture, HTH lacI-type spans 16–70 (PTLNEVARRAGVSPITASRALRGVASVAEELAQKVRDAARELGYVANPAARALAS). The H-T-H motif DNA-binding region spans 18–37 (LNEVARRAGVSPITASRALR).

Its activity is regulated as follows. Free GntR fails to recognize gluconate and 6-phosphogluconate, whereas the GntR/DNA complexes recognize both ligands. It is therefore likely that GntR DNA binding induces structural changes that permit GntR to recognize effectors. Its function is as follows. Involved in the regulation of glucose metabolism. Represses its own expression as well as that of the gluconate permease GntP. It employs an effector mediated de-repression mechanism: in the absence of ligand, GntR binds to the gntR and gntP promoters and represses their expression. The release of promoter bound GntR is induced by gluconate and 6-phosphogluconate that bind with similar apparent affinities to the GntR/DNA complex. The release of GntR leads to transcription of the genes. The polypeptide is HTH-type transcriptional regulator GntR (Pseudomonas aeruginosa (strain ATCC 15692 / DSM 22644 / CIP 104116 / JCM 14847 / LMG 12228 / 1C / PRS 101 / PAO1)).